Here is a 311-residue protein sequence, read N- to C-terminus: Urease accessory protein UreD 2 (311 aa).

Belongs to the UreD family. As to quaternary structure, ureD, UreF and UreG form a complex that acts as a GTP-hydrolysis-dependent molecular chaperone, activating the urease apoprotein by helping to assemble the nickel containing metallocenter of UreC. The UreE protein probably delivers the nickel.

It localises to the cytoplasm. In terms of biological role, required for maturation of urease via the functional incorporation of the urease nickel metallocenter. This chain is Urease accessory protein UreD 2, found in Methylorubrum extorquens (strain PA1) (Methylobacterium extorquens).